A 228-amino-acid chain; its full sequence is Cytochrome P450 monooxygenase ataY (228 aa).

Residue C216 participates in heme binding.

The protein belongs to the cytochrome P450 family. The cofactor is heme.

The protein operates within mycotoxin biosynthesis. Its function is as follows. Cytochrome P450 monooxygenase; part of the gene cluster that mediates the biosynthesis of acetylaranotin, a member of the epipolythiodioxopiperazine (ETP) class of toxins characterized by a disulfide-bridged cyclic dipeptide. The first step of acetylaranotin biosynthesis is performed by the NRPS ataP which produces diketopiperazine cyclo-L-Phe-L-Phe via the condensation of 2 phenylalanines (L-Phe). The ataC domain of ataTC then catalyzes the formation of bishydroxylation of cyclo-L-Phe-L-Phe. The glutathione S-transferase domain ataG in ataIMG further catalyzes the conjugation of two glutathiones to the bishydroxylated intermediate. Next, the dipeptidase ataJ removes the Glu residues. The following step is performed by the carbon sulfur lyase domain ataI of ataIMG which may convert the bis-cysteinyl adduct to yield an epidithiol intermediate. The ataT domain from ataTC then catalyzes the oxidation of the free dithiols, followed by a cyclization step catalyzed by the cytochrome P450 ataF. AtaF probably acts as an epoxidase to promote a dual epoxidation formation at C8 and C9 along with C8' and C9', followed by the spontaneous nucleophilic attack of the amide nitrogens N10 and N10' to yield an intermediate with the pyrrolidine partial structure. The final steps of acetylaranotin biosynthesis involve the acetylation and ring rearrangement of an epitetrathiodiketopiperazine intermediate to produce acetylaranotin. AtaH probably catalyzes the acetylation of epitetrathiodiketopiperazine to produce a diacetate and ataY is responsible for the formation of the dihydrooxepin moiety that converts the diacetate intermediate to acetylaranotin via acetylapoaranotin. Both enzymes could function independently in the absence of the other. The acetylaranotin bis-thiomethyltransferase ataS located outside of acetylaranotin gene cluster is the main thiomethyltransferase responsible for converting acetylaranotin and its related intermediates to their methylated forms. The protein is Cytochrome P450 monooxygenase ataY of Aspergillus terreus (strain NIH 2624 / FGSC A1156).